We begin with the raw amino-acid sequence, 155 residues long: MRKNRAPKREVLADPMYNSIVVTRLINRVMLDGKRGVAAQIVYGAFKQIEEATGNNPLEVFETAMENIMPVLEVRARRVGGSNYQVPVEVRPERRTTLGLRWLVTIARNRGEHTMQDRLAKEILDAANNTGAAVKKREDTHKMAEANRAFAHFRW.

Belongs to the universal ribosomal protein uS7 family. In terms of assembly, part of the 30S ribosomal subunit. Contacts proteins S9 and S11.

One of the primary rRNA binding proteins, it binds directly to 16S rRNA where it nucleates assembly of the head domain of the 30S subunit. Is located at the subunit interface close to the decoding center, probably blocks exit of the E-site tRNA. This is Small ribosomal subunit protein uS7 from Lactococcus lactis subsp. lactis (strain IL1403) (Streptococcus lactis).